Here is a 438-residue protein sequence, read N- to C-terminus: MKVLLVGGGGREHAIGEALVKGGAELYVVSNHRNPGLMRLAKDYGLAKETNVEDVIKFARKWGIELAFIGPEAPLEAGIVNALEEEGIPAVGPTREAARLETNKAWAREFMERNNIPGRKMFRIFDDVQEMRKWIDEYGKPVVVKPLGLTGGKGVKVVGYQLKDNEEAKEYAEHIIRKDGKVLIEERTDGVEFTLQVFTDGKKVIPMPLVQDYPHAYEGDVGPITGGMGSYSCSNHLLPFITEGDFERALKTLEETIEAMRKEGYPYKGILYGQFMLSGEGPVLIEYNARFGDPEAINVLAVLDDNLLEIAKGIVEGSLRKAKFLNKATVVKYIAPQGYPQDPIKGIRIEVDEEGIKNEGAKIIYAAVDENLTLLGSRALAIVGVADSLEEAERIAENGVSYVKGPIFYRKDVGTRESVEKRIEIMKKLGKEFEPNLC.

In terms of domain architecture, ATP-grasp spans 108–316 (REFMERNNIP…LLEIAKGIVE (209 aa)). 135–194 (IDEYGKPVVVKPLGLTGGKGVKVVGYQLKDNEEAKEYAEHIIRKDGKVLIEERTDGVEFT) lines the ATP pocket. Residues glutamine 274, glutamate 286, and asparagine 288 each contribute to the Mg(2+) site. Residues glutamine 274, glutamate 286, and asparagine 288 each contribute to the Mn(2+) site.

It belongs to the GARS family. Mg(2+) is required as a cofactor. The cofactor is Mn(2+).

The catalysed reaction is 5-phospho-beta-D-ribosylamine + glycine + ATP = N(1)-(5-phospho-beta-D-ribosyl)glycinamide + ADP + phosphate + H(+). The protein operates within purine metabolism; IMP biosynthesis via de novo pathway; N(1)-(5-phospho-D-ribosyl)glycinamide from 5-phospho-alpha-D-ribose 1-diphosphate: step 2/2. The sequence is that of Phosphoribosylamine--glycine ligase from Pyrococcus horikoshii (strain ATCC 700860 / DSM 12428 / JCM 9974 / NBRC 100139 / OT-3).